The chain runs to 199 residues: uncharacterized protein (199 aa).

Helical transmembrane passes span 10 to 32 (LTSQAAVLTSLVVIGLILCFIGY), 37 to 59 (VYSAVIGLFIGQLVGIYITINYY), 63 to 80 (LIVILASAIVGALLFALI), 83 to 100 (LGLIVTGAAFGYFVGVYL), 104 to 121 (YQVYAFVLAALFALINLF), 126 to 148 (LTVLITSVIGASAIALAVHMGIT), and 163 to 185 (FDAIFSNAYFDLLWFTLVLTGII).

It localises to the cell membrane. This is an uncharacterized protein from Archaeoglobus fulgidus (strain ATCC 49558 / DSM 4304 / JCM 9628 / NBRC 100126 / VC-16).